We begin with the raw amino-acid sequence, 261 residues long: Cytochrome c oxidase subunit 3 (261 aa).

Over 1-15 (MTHQTHAYHMVNPSP) the chain is Mitochondrial matrix. A helical transmembrane segment spans residues 16–34 (WPLTGALSALLMTSGLIMW). Residues 35–40 (FHFNST) are Mitochondrial intermembrane-facing. A helical transmembrane segment spans residues 41 to 66 (ILLMLGLTTNMLTMYQWWRDIIREST). Topologically, residues 67 to 72 (FQGHHT) are mitochondrial matrix. Residues 73-105 (PTVQKGLRYGMILFIISEVLFFTGFFWAFYHSS) form a helical membrane-spanning segment. Residues 106–128 (LAPTPELGGCWPPTGIHPLNPLE) lie on the Mitochondrial intermembrane side of the membrane. A helical transmembrane segment spans residues 129-152 (VPLLNTSVLLASGVSITWAHHSLM). At 153–155 (EGN) the chain is on the mitochondrial matrix side. The helical transmembrane segment at 156-183 (RNHMLQALFITIALGVYFTLLQASEYYE) threads the bilayer. Over 184–190 (APFTISD) the chain is Mitochondrial intermembrane. Residues 191–223 (GVYGSTFFVATGFHGLHVIIGSTFLIVCFFRQL) form a helical membrane-spanning segment. The Mitochondrial matrix portion of the chain corresponds to 224-232 (KFHFTSSHH). The helical transmembrane segment at 233–256 (FGFEAAAWYWHFVDVVWLFLYVSI) threads the bilayer. Over 257 to 261 (YWWGS) the chain is Mitochondrial intermembrane.

It belongs to the cytochrome c oxidase subunit 3 family. In terms of assembly, component of the cytochrome c oxidase (complex IV, CIV), a multisubunit enzyme composed of 14 subunits. The complex is composed of a catalytic core of 3 subunits MT-CO1, MT-CO2 and MT-CO3, encoded in the mitochondrial DNA, and 11 supernumerary subunits COX4I, COX5A, COX5B, COX6A, COX6B, COX6C, COX7A, COX7B, COX7C, COX8 and NDUFA4, which are encoded in the nuclear genome. The complex exists as a monomer or a dimer and forms supercomplexes (SCs) in the inner mitochondrial membrane with NADH-ubiquinone oxidoreductase (complex I, CI) and ubiquinol-cytochrome c oxidoreductase (cytochrome b-c1 complex, complex III, CIII), resulting in different assemblies (supercomplex SCI(1)III(2)IV(1) and megacomplex MCI(2)III(2)IV(2)).

It localises to the mitochondrion inner membrane. The catalysed reaction is 4 Fe(II)-[cytochrome c] + O2 + 8 H(+)(in) = 4 Fe(III)-[cytochrome c] + 2 H2O + 4 H(+)(out). Component of the cytochrome c oxidase, the last enzyme in the mitochondrial electron transport chain which drives oxidative phosphorylation. The respiratory chain contains 3 multisubunit complexes succinate dehydrogenase (complex II, CII), ubiquinol-cytochrome c oxidoreductase (cytochrome b-c1 complex, complex III, CIII) and cytochrome c oxidase (complex IV, CIV), that cooperate to transfer electrons derived from NADH and succinate to molecular oxygen, creating an electrochemical gradient over the inner membrane that drives transmembrane transport and the ATP synthase. Cytochrome c oxidase is the component of the respiratory chain that catalyzes the reduction of oxygen to water. Electrons originating from reduced cytochrome c in the intermembrane space (IMS) are transferred via the dinuclear copper A center (CU(A)) of subunit 2 and heme A of subunit 1 to the active site in subunit 1, a binuclear center (BNC) formed by heme A3 and copper B (CU(B)). The BNC reduces molecular oxygen to 2 water molecules using 4 electrons from cytochrome c in the IMS and 4 protons from the mitochondrial matrix. The sequence is that of Cytochrome c oxidase subunit 3 (MT-CO3) from Aepyceros melampus (Impala).